The primary structure comprises 510 residues: Flavonoid 3',5'-hydroxylase (510 aa).

Heme is bound at residue C447.

The protein belongs to the cytochrome P450 family. Requires heme as cofactor.

The enzyme catalyses a 3',5'-unsubstituted flavanone + 2 reduced [NADPH--hemoprotein reductase] + 2 O2 = a 3',5'-dihydroxyflavanone + 2 oxidized [NADPH--hemoprotein reductase] + 2 H2O + 2 H(+). Its pathway is pigment biosynthesis; anthocyanin biosynthesis. Functionally, catalyzes the 3'5'-hydroxylation of naringenin and eriodictyol to form 5,7,3,'4',5'-pentahydroxyflavanone and 3',5'-hydroxylation of dihydrokaempferol and dihydroquercetin to form dihydromyricetin. This Eustoma exaltatum subsp. russellianum (Bluebells) protein is Flavonoid 3',5'-hydroxylase (CYP75A5).